The chain runs to 356 residues: Photosystem II protein D1 (356 aa).

A run of 3 helical transmembrane segments spans residues 29-46 (YVGWFGTLMIPTLLTATT), 118-133 (HFLIGIFCYMGRQWEL), and 142-156 (WICVAYSAPVSAATA). His118 contributes to the chlorophyll a binding site. Tyr126 provides a ligand contact to pheophytin a. The [CaMn4O5] cluster site is built by Asp170 and Glu189. Residues 197–218 (FHMLGVAGVFGGSLFSAMHGSL) form a helical membrane-spanning segment. Chlorophyll a is bound at residue His198. A quinone is bound by residues His215 and 264–265 (SF). Position 215 (His215) interacts with Fe cation. His272 contributes to the Fe cation binding site. Residues 274-288 (FLGAWPVIGIWFTAM) traverse the membrane as a helical segment. His332, Glu333, Asp342, and Ala344 together coordinate [CaMn4O5] cluster. The propeptide occupies 345 to 356 (SAEPVSAPVING).

The protein belongs to the reaction center PufL/M/PsbA/D family. PSII is composed of 1 copy each of membrane proteins PsbA, PsbB, PsbC, PsbD, PsbE, PsbF, PsbH, PsbI, PsbJ, PsbK, PsbL, PsbM, PsbT, PsbX, PsbY, PsbZ, Psb30/Ycf12, peripheral proteins PsbO, CyanoQ (PsbQ), PsbU, PsbV and a large number of cofactors. It forms dimeric complexes. Requires The D1/D2 heterodimer binds P680, chlorophylls that are the primary electron donor of PSII, and subsequent electron acceptors. It shares a non-heme iron and each subunit binds pheophytin, quinone, additional chlorophylls, carotenoids and lipids. D1 provides most of the ligands for the Mn4-Ca-O5 cluster of the oxygen-evolving complex (OEC). There is also a Cl(-1) ion associated with D1 and D2, which is required for oxygen evolution. The PSII complex binds additional chlorophylls, carotenoids and specific lipids. as cofactor. Post-translationally, tyr-161 forms a radical intermediate that is referred to as redox-active TyrZ, YZ or Y-Z. C-terminally processed by CtpA; processing is essential to allow assembly of the oxygen-evolving complex and thus photosynthetic growth.

Its subcellular location is the cellular thylakoid membrane. It catalyses the reaction 2 a plastoquinone + 4 hnu + 2 H2O = 2 a plastoquinol + O2. Its function is as follows. Photosystem II (PSII) is a light-driven water:plastoquinone oxidoreductase that uses light energy to abstract electrons from H(2)O, generating O(2) and a proton gradient subsequently used for ATP formation. It consists of a core antenna complex that captures photons, and an electron transfer chain that converts photonic excitation into a charge separation. The D1/D2 (PsbA/PsbD) reaction center heterodimer binds P680, the primary electron donor of PSII as well as several subsequent electron acceptors. This Crocosphaera subtropica (strain ATCC 51142 / BH68) (Cyanothece sp. (strain ATCC 51142)) protein is Photosystem II protein D1.